The chain runs to 1059 residues: Mitogen-activated protein kinase kinase kinase mlk-1 (1059 aa).

The tract at residues 1–66 is disordered; the sequence is MEQASVPSYV…ESSQVSRESP (66 aa). A compositionally biased stretch (low complexity) spans 38-48; that stretch reads DTTTASTSTDS. Residues 69–130 enclose the SH3 domain; it reads RASKAFVASY…PSNYAREVTY (62 aa). Residues 150–454 enclose the Protein kinase domain; the sequence is TLSDCQIGHG…TLAISFKQYA (305 aa). Residues 156–164 and Lys-193 each bind ATP; that span reads IGHGATATV. Positions 199–224 form a coiled coil; sequence ASNFRADVVSTDEQLEQLKREANLVN. The Proton acceptor role is filled by Asp-297. Position 355 is a phosphoserine; by max-2 and tpa-1 (Ser-355). Disordered regions lie at residues 617–699 and 714–808; these read PVVS…QTTR and RAQS…SSSD. A compositionally biased stretch (polar residues) spans 623-633; that stretch reads MDDSNTFSTID. 2 stretches are compositionally biased toward basic and acidic residues: residues 639-648 and 662-674; these read DPNHSKESKK and NKRD…DERA. Residues 678-689 show a composition bias toward low complexity; the sequence is SISSRSSSTTSS. Residues 690–699 show a composition bias toward polar residues; that stretch reads NRLITGQTTR. Residues 749 to 759 show a composition bias toward basic and acidic residues; sequence RYVKDLEKDTP. Polar residues-rich tracts occupy residues 774 to 790 and 798 to 808; these read LDQT…SINN and SRRTTANSSSD. The NPQY motif signature appears at 937 to 940; that stretch reads NPQY. A Phosphotyrosine modification is found at Tyr-940.

It belongs to the protein kinase superfamily. STE Ser/Thr protein kinase family. MAP kinase kinase kinase subfamily. In terms of assembly, interacts with max-2; the interaction is independent of max-2 and mlk-1 kinase activities. May interact (via NPQY motif when phosphorylated on tyrosine residue) with shc-1 (via PID domain); the interaction may facilitate mek-1 phosphorylation by bringing mlk-1 and mek-1 together. Interacts with svh-2 (via cytoplasmic domain). Interacts with tpa-1. It depends on Mg(2+) as a cofactor. Post-translationally, may be phosphorylated on tyrosine residues by svh-2. In terms of processing, may be ubiquitinated and targeted for proteasomal degradation by E3 ubiquitin ligase rpm-1. Expressed in pharynx, intestine, hypodermis, neurons and body muscles.

It catalyses the reaction L-seryl-[protein] + ATP = O-phospho-L-seryl-[protein] + ADP + H(+). It carries out the reaction L-threonyl-[protein] + ATP = O-phospho-L-threonyl-[protein] + ADP + H(+). Activated by phosphorylation at Ser-355. May be activated by svh-2-mediated phosphorylation. Serine/threonine-protein kinase which, by phosphorylating and activating mek-1, plays an important role in the activation of the JNK pathway composed of mlk-1, mek-1 and kgb-1. Involved in the response to environmental stress such as heavy metals. By activating the JNK pathway downstream of tyrosine receptor svh-2, plays a role in axon regeneration after injury. This is Mitogen-activated protein kinase kinase kinase mlk-1 from Caenorhabditis elegans.